Reading from the N-terminus, the 99-residue chain is NADH-quinone oxidoreductase subunit K (99 aa).

The next 3 helical transmembrane spans lie at 3–23 (PDNYLHLSALLFTIGAAGVLL), 28–48 (IVVFMCVELMLNAANLAFVAF), and 59–79 (VVAFFTMVVAACEVVIGLAII).

The protein belongs to the complex I subunit 4L family. NDH-1 is composed of 14 different subunits. Subunits NuoA, H, J, K, L, M, N constitute the membrane sector of the complex.

It is found in the cell membrane. It carries out the reaction a quinone + NADH + 5 H(+)(in) = a quinol + NAD(+) + 4 H(+)(out). Functionally, NDH-1 shuttles electrons from NADH, via FMN and iron-sulfur (Fe-S) centers, to quinones in the respiratory chain. The immediate electron acceptor for the enzyme in this species is believed to be a menaquinone. Couples the redox reaction to proton translocation (for every two electrons transferred, four hydrogen ions are translocated across the cytoplasmic membrane), and thus conserves the redox energy in a proton gradient. The sequence is that of NADH-quinone oxidoreductase subunit K from Mycobacterium sp. (strain KMS).